A 185-amino-acid polypeptide reads, in one-letter code: Ribosome-recycling factor (185 aa).

It belongs to the RRF family.

The protein localises to the cytoplasm. Its function is as follows. Responsible for the release of ribosomes from messenger RNA at the termination of protein biosynthesis. May increase the efficiency of translation by recycling ribosomes from one round of translation to another. The chain is Ribosome-recycling factor from Pseudomonas putida (strain GB-1).